The primary structure comprises 246 residues: ATP synthase subunit b 1 (246 aa).

Residues 5-27 (WFTFTAQVINFLVLVGLLRYFLY) form a helical membrane-spanning segment.

It belongs to the ATPase B chain family. As to quaternary structure, F-type ATPases have 2 components, F(1) - the catalytic core - and F(0) - the membrane proton channel. F(1) has five subunits: alpha(3), beta(3), gamma(1), delta(1), epsilon(1). F(0) has three main subunits: a(1), b(2) and c(10-14). The alpha and beta chains form an alternating ring which encloses part of the gamma chain. F(1) is attached to F(0) by a central stalk formed by the gamma and epsilon chains, while a peripheral stalk is formed by the delta and b chains.

Its subcellular location is the cell inner membrane. Its function is as follows. F(1)F(0) ATP synthase produces ATP from ADP in the presence of a proton or sodium gradient. F-type ATPases consist of two structural domains, F(1) containing the extramembraneous catalytic core and F(0) containing the membrane proton channel, linked together by a central stalk and a peripheral stalk. During catalysis, ATP synthesis in the catalytic domain of F(1) is coupled via a rotary mechanism of the central stalk subunits to proton translocation. In terms of biological role, component of the F(0) channel, it forms part of the peripheral stalk, linking F(1) to F(0). The sequence is that of ATP synthase subunit b 1 from Rhodopirellula baltica (strain DSM 10527 / NCIMB 13988 / SH1).